Here is a 161-residue protein sequence, read N- to C-terminus: 18.1 kDa class I heat shock protein (161 aa).

A sHSP domain is found at 47-161; sequence ETAAFAGARI…PDVKSIQVTG (115 aa).

Belongs to the small heat shock protein (HSP20) family. As to quaternary structure, may form oligomeric structures.

It localises to the cytoplasm. This chain is 18.1 kDa class I heat shock protein (HSP18.1), found in Oryza sativa subsp. japonica (Rice).